A 239-amino-acid chain; its full sequence is Suppressor of organelle fusion 1 (239 aa).

It belongs to the WD repeat WDR91 family. In terms of assembly, interacts with sorf-2; the interaction is direct. Interacts with bec-1.

It localises to the early endosome. The protein resides in the late endosome. It is found in the cytoplasm. Functionally, together with sorf-2 negatively regulates the levels of phosphatidylinositol 3-phosphate (PtdIns3P) to enable the conversion of early endosomes to late endosomes. Binds to sorf-2 and the sorf-1-sorf-2 complex likely acts through bec-1, a non-catalytic subunit of phosphatidylinositol 3-kinase (PI3K), to suppress PI3K activity, thereby negatively regulating endosomal PtdIns3P levels. This chain is Suppressor of organelle fusion 1, found in Caenorhabditis elegans.